A 277-amino-acid polypeptide reads, in one-letter code: NADPH-dependent 7-cyano-7-deazaguanine reductase (277 aa).

83-85 (IES) provides a ligand contact to substrate. NADPH is bound at residue 85–86 (SK). The active-site Thioimide intermediate is C184. The Proton donor role is filled by D191. Substrate is bound at residue 223 to 224 (HE). 252-253 (RG) provides a ligand contact to NADPH.

The protein belongs to the GTP cyclohydrolase I family. QueF type 2 subfamily. In terms of assembly, homodimer.

Its subcellular location is the cytoplasm. It carries out the reaction 7-aminomethyl-7-carbaguanine + 2 NADP(+) = 7-cyano-7-deazaguanine + 2 NADPH + 3 H(+). The protein operates within tRNA modification; tRNA-queuosine biosynthesis. Catalyzes the NADPH-dependent reduction of 7-cyano-7-deazaguanine (preQ0) to 7-aminomethyl-7-deazaguanine (preQ1). This chain is NADPH-dependent 7-cyano-7-deazaguanine reductase, found in Cupriavidus necator (strain ATCC 17699 / DSM 428 / KCTC 22496 / NCIMB 10442 / H16 / Stanier 337) (Ralstonia eutropha).